The primary structure comprises 277 residues: Urease accessory protein UreD (277 aa).

Belongs to the UreD family. In terms of assembly, ureD, UreF and UreG form a complex that acts as a GTP-hydrolysis-dependent molecular chaperone, activating the urease apoprotein by helping to assemble the nickel containing metallocenter of UreC. The UreE protein probably delivers the nickel.

The protein resides in the cytoplasm. In terms of biological role, required for maturation of urease via the functional incorporation of the urease nickel metallocenter. This Yersinia pestis (strain Pestoides F) protein is Urease accessory protein UreD.